Reading from the N-terminus, the 389-residue chain is Putative RNA methyltransferase R405 (389 aa).

S-adenosyl-L-methionine-binding residues include Gln-207, Asp-261, and Asp-314. The active-site Nucleophile is the Cys-342.

This sequence belongs to the class I-like SAM-binding methyltransferase superfamily. RNA M5U methyltransferase family.

The polypeptide is Putative RNA methyltransferase R405 (Acanthamoeba polyphaga (Amoeba)).